The chain runs to 121 residues: Large ribosomal subunit protein eL31 (121 aa).

This sequence belongs to the eukaryotic ribosomal protein eL31 family.

This Perilla frutescens (Beefsteak mint) protein is Large ribosomal subunit protein eL31 (RPL31).